We begin with the raw amino-acid sequence, 166 residues long: MRLILLSGLLLLGIFLANGDEVDPDRKLLNSLIDALMHLQREFANLKGSFLIVHKARSFGSGSERMYVTNKEIKNFEALRQICEQADGHIPSPQLENQNKAFANVLERHGKEAYLVVGDSANFTNWAAGEPNKAAGACVKADTHGSWHSASCDDNLLVVCEFYFML.

The first 19 residues, 1-19 (MRLILLSGLLLLGIFLANG), serve as a signal peptide directing secretion. Residues 46–161 (LKGSFLIVHK…CDDNLLVVCE (116 aa)) enclose the C-type lectin domain. 2 cysteine pairs are disulfide-bonded: Cys-83–Cys-160 and Cys-138–Cys-152. Asn-122 is a glycosylation site (N-linked (GlcNAc...) asparagine).

It belongs to the alpha-type phospholipase A2 inhibitor family. As to quaternary structure, homotrimer; non-covalently linked. Expressed by the liver.

It localises to the secreted. Functionally, this phospholipase A2 inhibitor binds directly phospholipase A2 in the presence or absence of calcium. This Bothrops jararacussu (Jararacussu) protein is Phospholipase A2 inhibitor.